The chain runs to 145 residues: Large ribosomal subunit protein uL14m (145 aa).

A mitochondrion-targeting transit peptide spans 1-30; the sequence is MAALTGLWGSFAHVSRAFSQRCFSTSGSLS.

The protein belongs to the universal ribosomal protein uL14 family. As to quaternary structure, component of the mitochondrial ribosome large subunit (39S) which comprises a 16S rRNA and about 50 distinct proteins. Interacts with MALSU1.

Its subcellular location is the mitochondrion. In terms of biological role, may form part of 2 intersubunit bridges in the assembled ribosome. Upon binding to MALSU1, intersubunit bridge formation is blocked, preventing ribosome formation and repressing translation. The sequence is that of Large ribosomal subunit protein uL14m (Mrpl14) from Mus musculus (Mouse).